Consider the following 138-residue polypeptide: Acidic phospholipase A2 2 (138 aa).

Residues 1–16 (MRTLWIVAVLLLGVEG) form the signal peptide. 7 disulfide bridges follow: cysteine 42–cysteine 131, cysteine 44–cysteine 60, cysteine 59–cysteine 111, cysteine 65–cysteine 138, cysteine 66–cysteine 104, cysteine 73–cysteine 97, and cysteine 91–cysteine 102. Tyrosine 43, glycine 45, and glycine 47 together coordinate Ca(2+). Residue histidine 63 is part of the active site. Aspartate 64 lines the Ca(2+) pocket. The active site involves aspartate 105.

It belongs to the phospholipase A2 family. Group II subfamily. D49 sub-subfamily. Ca(2+) is required as a cofactor. Expressed by the venom gland.

The protein resides in the secreted. The catalysed reaction is a 1,2-diacyl-sn-glycero-3-phosphocholine + H2O = a 1-acyl-sn-glycero-3-phosphocholine + a fatty acid + H(+). Functionally, snake venom phospholipase A2 (PLA2) that displays edema-inducing activities, exhibits indirect hemolytic activity, and inhibits ADP-induced platelet aggregation. PLA2 catalyzes the calcium-dependent hydrolysis of the 2-acyl groups in 3-sn-phosphoglycerides. The polypeptide is Acidic phospholipase A2 2 (Protobothrops mucrosquamatus (Taiwan habu)).